The following is a 514-amino-acid chain: Activin receptor type-2A (514 aa).

A signal peptide spans 1–20 (MGAATKLAFAVFLISCSSAG). The Extracellular segment spans residues 21–136 (SILGRSETKE…TSNPVTTKPP (116 aa)). Intrachain disulfides connect Cys-31/Cys-61, Cys-51/Cys-79, Cys-86/Cys-105, Cys-92/Cys-104, and Cys-106/Cys-111. Residues Asn-46, Asn-67, and Asn-88 are each glycosylated (N-linked (GlcNAc...) asparagine). The helical transmembrane segment at 137–162 (LFNTLLYSLVPIMVVAVIVLFSFWMY) threads the bilayer. The Cytoplasmic portion of the chain corresponds to 163–514 (RHHKLAYPPV…VDFPPKESSL (352 aa)). The Protein kinase domain occupies 193–486 (LQLLEVKARG…EERIIQMQKL (294 aa)). ATP-binding positions include 199–207 (KARGRFGCV) and Lys-220. Asp-323 acts as the Proton acceptor in catalysis.

The protein belongs to the protein kinase superfamily. TKL Ser/Thr protein kinase family. TGFB receptor subfamily.

It localises to the cell membrane. The enzyme catalyses L-threonyl-[receptor-protein] + ATP = O-phospho-L-threonyl-[receptor-protein] + ADP + H(+). The catalysed reaction is L-seryl-[receptor-protein] + ATP = O-phospho-L-seryl-[receptor-protein] + ADP + H(+). Functionally, receptor for activin A, activin B and inhibin A. Involved in transmembrane signaling. This is Activin receptor type-2A (acvr2a) from Xenopus laevis (African clawed frog).